The sequence spans 107 residues: uncharacterized protein (107 aa).

3 helical membrane-spanning segments follow: residues 16 to 36, 47 to 67, and 85 to 105; these read VIPCTLSSPSFVLMAVISESL, IISLIESAVTSLSYVTWHSLV, and LIVLVQALHVIPCTASITSLI.

It localises to the membrane. This is an uncharacterized protein from Saccharomyces cerevisiae (strain ATCC 204508 / S288c) (Baker's yeast).